The sequence spans 322 residues: Succinate/fumarate mitochondrial transporter (322 aa).

3 Solcar repeats span residues 8 to 99 (SHPA…YRTL), 111 to 202 (GNTF…LKEF), and 212 to 303 (LPSW…VREH). The next 6 helical transmembrane spans lie at 11 to 31 (AINLMAGGTAGLFEALCCHPL), 68 to 88 (FLALYKGLGAVVIGIIPKMAI), 114 to 134 (FVAGVGAGITEAVLVVNPMEV), 177 to 193 (GVSLTAARQATNQGANF), 219 to 235 (CIGLISGAIGPFSNAPL), and 278 to 295 (GITPRVMRVAPGQAVTFT).

The protein belongs to the mitochondrial carrier (TC 2.A.29) family.

It is found in the mitochondrion inner membrane. Functionally, transports cytoplasmic succinate, derived from isocitrate by the action of isocitrate lyase in the cytosol, into the mitochondrial matrix in exchange for fumarate. This chain is Succinate/fumarate mitochondrial transporter (SFC1), found in Saccharomyces cerevisiae (strain ATCC 204508 / S288c) (Baker's yeast).